We begin with the raw amino-acid sequence, 90 residues long: Protein LIM1 (90 aa).

The signal sequence occupies residues 1 to 26 (MASMKSLATAILVVLLLAALSREGRS). 4 disulfides stabilise this stretch: C29-C66, C39-C55, C56-C81, and C68-C88.

This sequence belongs to the A9/FIL1 family.

The protein resides in the secreted. The chain is Protein LIM1 (LIM1) from Lilium longiflorum (Trumpet lily).